Consider the following 144-residue polypeptide: Large ribosomal subunit protein uL11 (144 aa).

Belongs to the universal ribosomal protein uL11 family. Part of the ribosomal stalk of the 50S ribosomal subunit. Interacts with L10 and the large rRNA to form the base of the stalk. L10 forms an elongated spine to which L12 dimers bind in a sequential fashion forming a multimeric L10(L12)X complex. In terms of processing, one or more lysine residues are methylated.

Its function is as follows. Forms part of the ribosomal stalk which helps the ribosome interact with GTP-bound translation factors. This is Large ribosomal subunit protein uL11 from Deinococcus geothermalis (strain DSM 11300 / CIP 105573 / AG-3a).